The sequence spans 231 residues: Ureidoacrylate amidohydrolase RutB (231 aa).

The Proton acceptor role is filled by Asp25. Lys134 is an active-site residue. Cys167 serves as the catalytic Nucleophile.

It belongs to the isochorismatase family. RutB subfamily.

The catalysed reaction is (Z)-3-ureidoacrylate + H2O + H(+) = (Z)-3-aminoacrylate + NH4(+) + CO2. It carries out the reaction (Z)-3-ureidoacrylate + H2O = (Z)-3-aminoacrylate + carbamate + H(+). The enzyme catalyses (Z)-2-methylureidoacrylate + H2O + H(+) = (Z)-2-methylaminoacrylate + NH4(+) + CO2. Its function is as follows. Hydrolyzes ureidoacrylate to form aminoacrylate and carbamate. The carbamate hydrolyzes spontaneously, thereby releasing one of the nitrogen atoms of the pyrimidine ring as ammonia and one of its carbon atoms as CO2. This Escherichia coli O139:H28 (strain E24377A / ETEC) protein is Ureidoacrylate amidohydrolase RutB.